The following is a 224-amino-acid chain: Zinc finger C4H2 domain-containing protein (224 aa).

Positions 11–104 form a coiled coil; the sequence is LESIKEIRNK…RRLHDEYKPL (94 aa). The C4H2-type zinc-finger motif lies at 189 to 206; sequence CLSCHQQIHRNAPICPLC.

Expressed in fetal tissues, including in brain, intestine, lung, kidney and muscle. Isoform 1 is expressed in numerous fetal brain regions. Isoform 3 is highly expressed in numerous fetal brain regions and spinal cord.

Its subcellular location is the cytoplasm. It is found in the nucleus. It localises to the postsynaptic cell membrane. Functionally, plays a role in interneurons differentiation. Involved in neuronal development and in neuromuscular junction formation. The sequence is that of Zinc finger C4H2 domain-containing protein (ZC4H2) from Homo sapiens (Human).